The primary structure comprises 126 residues: Large ribosomal subunit protein bL12 (126 aa).

Belongs to the bacterial ribosomal protein bL12 family. Homodimer. Part of the ribosomal stalk of the 50S ribosomal subunit. Forms a multimeric L10(L12)X complex, where L10 forms an elongated spine to which 2 to 4 L12 dimers bind in a sequential fashion. Binds GTP-bound translation factors.

Functionally, forms part of the ribosomal stalk which helps the ribosome interact with GTP-bound translation factors. Is thus essential for accurate translation. This chain is Large ribosomal subunit protein bL12, found in Bordetella petrii (strain ATCC BAA-461 / DSM 12804 / CCUG 43448).